Consider the following 277-residue polypeptide: Orotidine 5'-phosphate decarboxylase (277 aa).

Lys-95 (proton donor) is an active-site residue.

This sequence belongs to the OMP decarboxylase family. Type 2 subfamily.

It catalyses the reaction orotidine 5'-phosphate + H(+) = UMP + CO2. Its pathway is pyrimidine metabolism; UMP biosynthesis via de novo pathway; UMP from orotate: step 2/2. The sequence is that of Orotidine 5'-phosphate decarboxylase from Mycolicibacterium vanbaalenii (strain DSM 7251 / JCM 13017 / BCRC 16820 / KCTC 9966 / NRRL B-24157 / PYR-1) (Mycobacterium vanbaalenii).